The following is a 592-amino-acid chain: Bifunctional dolabella-3,7-dien-18-ol synthase/dolathalia-3,7,11-triene synthase TPS20, chloroplastic (592 aa).

The N-terminal 52 residues, 1 to 52, are a transit peptide targeting the chloroplast; the sequence is MEAITKNGSLSQTLVHCGPKSLSSFIPVRCLRFSKNPFPKKLVVTRARTSIN. 5 residues coordinate Mg(2+): D349, D353, D491, T495, and E499. The DDXXD motif signature appears at 349 to 353; it reads DDLYD.

Belongs to the terpene synthase family. Tpsa subfamily. The cofactor is Mg(2+). Mn(2+) is required as a cofactor.

The protein localises to the plastid. It localises to the chloroplast. The enzyme catalyses (2E,6E,10E)-geranylgeranyl diphosphate + H2O = (3E,7E)-dolabella-3,7-dien-18-ol + diphosphate. It catalyses the reaction (2E,6E,10E)-geranylgeranyl diphosphate = (3E,7E)-dolathalia-3,7,11-triene + diphosphate. It participates in secondary metabolite biosynthesis; terpenoid biosynthesis. Functionally, involved in the biosynthesis of diterpenes in roots. Possesses dolabella-3,7-dien-18-ol synthase activity and dolathalia-3,7,11-triene synthase activity in vitro. Catalyzes the formation of dolabella-3,7-dien-18-ol and dolathalia-3,7,11-triene from geranygeranyl diphosphate (GGPP). Does not seem to be involved in sesquiterpene biosynthesis. This chain is Bifunctional dolabella-3,7-dien-18-ol synthase/dolathalia-3,7,11-triene synthase TPS20, chloroplastic, found in Arabidopsis thaliana (Mouse-ear cress).